We begin with the raw amino-acid sequence, 147 residues long: Large ribosomal subunit protein bL9 (147 aa).

Belongs to the bacterial ribosomal protein bL9 family.

Functionally, binds to the 23S rRNA. The chain is Large ribosomal subunit protein bL9 from Thermoanaerobacter pseudethanolicus (strain ATCC 33223 / 39E) (Clostridium thermohydrosulfuricum).